Reading from the N-terminus, the 493-residue chain is Guanosine-5'-triphosphate,3'-diphosphate pyrophosphatase (493 aa).

This sequence belongs to the GppA/Ppx family. GppA subfamily.

The enzyme catalyses guanosine 3'-diphosphate 5'-triphosphate + H2O = guanosine 3',5'-bis(diphosphate) + phosphate + H(+). Its pathway is purine metabolism; ppGpp biosynthesis; ppGpp from GTP: step 2/2. Its function is as follows. Catalyzes the conversion of pppGpp to ppGpp. Guanosine pentaphosphate (pppGpp) is a cytoplasmic signaling molecule which together with ppGpp controls the 'stringent response', an adaptive process that allows bacteria to respond to amino acid starvation, resulting in the coordinated regulation of numerous cellular activities. In Salmonella paratyphi B (strain ATCC BAA-1250 / SPB7), this protein is Guanosine-5'-triphosphate,3'-diphosphate pyrophosphatase.